A 112-amino-acid polypeptide reads, in one-letter code: UPF0102 protein Spea_0251 (112 aa).

The protein belongs to the UPF0102 family.

This chain is UPF0102 protein Spea_0251, found in Shewanella pealeana (strain ATCC 700345 / ANG-SQ1).